The primary structure comprises 726 residues: Disintegrin and metalloproteinase domain-containing protein 20 (726 aa).

The N-terminal stretch at 1–31 (MAVGEPLVHIRVTLLLLWFGMFLSISGHSQA) is a signal peptide. The propeptide occupies 32–206 (RPSQYFTSPE…SSFVGWWTHQ (175 aa)). Positions 171–178 (MRCGLTEE) match the Cysteine switch motif. Cys173 is a Zn(2+) binding site. N-linked (GlcNAc...) asparagine glycans are attached at residues Asn191 and Asn226. One can recognise a Peptidase M12B domain in the interval 207-400 (RFVELVVVVD…SGLCIQPPPY (194 aa)). The Extracellular segment spans residues 207–693 (RFVELVVVVD…GLNVMGKLRY (487 aa)). 3 disulfide bridges follow: Cys317-Cys394, Cys357-Cys379, and Cys359-Cys364. His342 provides a ligand contact to Zn(2+). Glu343 is an active-site residue. Zn(2+)-binding residues include His346 and His352. N-linked (GlcNAc...) asparagine glycans are attached at residues Asn378, Asn438, Asn479, and Asn587. Residues 407–493 (LKYCGNLVVE…QCPDDVYVQD (87 aa)) form the Disintegrin domain. A disulfide bond links Cys465 and Cys485. Intrachain disulfides connect Cys635–Cys646, Cys640–Cys652, and Cys654–Cys663. Positions 635-663 (CQPKTCNMRGICNNKQHCHCNHEWAPPYC) constitute an EGF-like domain. The helical transmembrane segment at 694–714 (LSLLCLLPLVAFLLFCLHVLF) threads the bilayer. The Cytoplasmic portion of the chain corresponds to 715–726 (KKRTKSKEDEEG).

Requires Zn(2+) as cofactor. In terms of processing, has no obvious cleavage site for furin endopeptidase, suggesting that the proteolytic processing is regulated. Testis specific.

The protein localises to the membrane. In terms of biological role, may be involved in sperm maturation and/or fertilization. The protein is Disintegrin and metalloproteinase domain-containing protein 20 (ADAM20) of Homo sapiens (Human).